A 716-amino-acid polypeptide reads, in one-letter code: Polyribonucleotide nucleotidyltransferase (716 aa).

Residues aspartate 495 and aspartate 501 each coordinate Mg(2+). The 60-residue stretch at 562–621 folds into the KH domain; that stretch reads PRLFRIQINPEQIGLVIGPGGKTIRSITEQTGAKIDIEDTGAVTISAVDADSALRAKSII. Positions 631-699 constitute an S1 motif domain; sequence GDVYIGKVTR…QKGRVNLTRK (69 aa).

The protein belongs to the polyribonucleotide nucleotidyltransferase family. The cofactor is Mg(2+).

Its subcellular location is the cytoplasm. The enzyme catalyses RNA(n+1) + phosphate = RNA(n) + a ribonucleoside 5'-diphosphate. Functionally, involved in mRNA degradation. Catalyzes the phosphorolysis of single-stranded polyribonucleotides processively in the 3'- to 5'-direction. The sequence is that of Polyribonucleotide nucleotidyltransferase from Synechococcus sp. (strain ATCC 27144 / PCC 6301 / SAUG 1402/1) (Anacystis nidulans).